A 293-amino-acid chain; its full sequence is Protease HtpX (293 aa).

2 helical membrane-spanning segments follow: residues 2–22 (FRIL…SVTL) and 38–58 (LTSL…ISLF). His145 contacts Zn(2+). The active site involves Glu146. His149 provides a ligand contact to Zn(2+). A run of 2 helical transmembrane segments spans residues 156 to 176 (VTLA…ARII) and 193 to 213 (IGFF…ASII). Glu222 contributes to the Zn(2+) binding site.

Belongs to the peptidase M48B family. The cofactor is Zn(2+).

The protein resides in the cell inner membrane. This Hahella chejuensis (strain KCTC 2396) protein is Protease HtpX.